The following is a 160-amino-acid chain: Small ribosomal subunit protein uS17z (160 aa).

This sequence belongs to the universal ribosomal protein uS17 family.

It localises to the cytoplasm. The polypeptide is Small ribosomal subunit protein uS17z (RPS11A) (Arabidopsis thaliana (Mouse-ear cress)).